The chain runs to 340 residues: Glycerol-3-phosphate dehydrogenase [NAD(P)+] (340 aa).

Residues Ser11, Trp12, Arg33, and Lys106 each contribute to the NADPH site. Residues Lys106, Gly137, and Ser139 each coordinate sn-glycerol 3-phosphate. Ala141 contributes to the NADPH binding site. Residues Lys192, Asp245, Ser255, Arg256, and Asn257 each coordinate sn-glycerol 3-phosphate. Catalysis depends on Lys192, which acts as the Proton acceptor. Arg256 provides a ligand contact to NADPH. Positions 280 and 282 each coordinate NADPH.

Belongs to the NAD-dependent glycerol-3-phosphate dehydrogenase family.

It localises to the cytoplasm. The catalysed reaction is sn-glycerol 3-phosphate + NAD(+) = dihydroxyacetone phosphate + NADH + H(+). The enzyme catalyses sn-glycerol 3-phosphate + NADP(+) = dihydroxyacetone phosphate + NADPH + H(+). The protein operates within membrane lipid metabolism; glycerophospholipid metabolism. Its function is as follows. Catalyzes the reduction of the glycolytic intermediate dihydroxyacetone phosphate (DHAP) to sn-glycerol 3-phosphate (G3P), the key precursor for phospholipid synthesis. The chain is Glycerol-3-phosphate dehydrogenase [NAD(P)+] from Bacillus cereus (strain ATCC 10987 / NRS 248).